A 190-amino-acid chain; its full sequence is Dynactin subunit 6 (190 aa).

At Thr186 the chain carries Phosphothreonine; by CDK1.

Belongs to the dynactin subunits 5/6 family. Dynactin subunit 6 subfamily. Subunit of dynactin, a multiprotein complex part of a tripartite complex with dynein and a adapter, such as BICDL1, BICD2 or HOOK3. The dynactin complex is built around ACTR1A/ACTB filament and consists of an actin-related filament composed of a shoulder domain, a pointed end and a barbed end. Its length is defined by its flexible shoulder domain. The soulder is composed of 2 DCTN1 subunits, 4 DCTN2 and 2 DCTN3. The 4 DCNT2 (via N-terminus) bind the ACTR1A filament and act as molecular rulers to determine the length. The pointed end is important for binding dynein-dynactin cargo adapters. Consists of 4 subunits: ACTR10, DCNT4, DCTN5 and DCTN6. Within the complex DCTN6 forms a heterodimer with DCTN5. The barbed end is composed of a CAPZA1:CAPZB heterodimers, which binds ACTR1A/ACTB filament and dynactin and stabilizes dynactin. Interacts with PLK1. Interacts with N4BP2L1. In terms of processing, phosphorylation at Thr-186 by CDK1 during mitotic prometaphase creates a binding site for PLK1 that facilitates its recruitment to kinetochores. Ubiquitous.

The protein resides in the cytoplasm. It localises to the cytoskeleton. The protein localises to the chromosome. Its subcellular location is the centromere. It is found in the kinetochore. Part of the dynactin complex that activates the molecular motor dynein for ultra-processive transport along microtubules. This Homo sapiens (Human) protein is Dynactin subunit 6.